The following is a 122-amino-acid chain: Acyl carrier protein 1, mitochondrial (122 aa).

Residues 1–34 (MALRNAILRHLRVPVQTLGLNQSKIGFLGTIRSF) constitute a mitochondrion transit peptide. The 76-residue stretch at 44–119 (EAVVDRVLDV…LAIEYVYNHP (76 aa)) folds into the Carrier domain. At serine 79 the chain carries O-(pantetheine 4'-phosphoryl)serine.

The protein belongs to the acyl carrier protein (ACP) family. As to quaternary structure, complex I is composed of at least 49 different subunits. Post-translationally, 4'-phosphopantetheine is transferred from CoA to a specific serine of the apo-ACP-like protein.

It localises to the mitochondrion. Its pathway is lipid metabolism; fatty acid biosynthesis. In terms of biological role, carrier of the growing fatty acid chain in fatty acid biosynthesis. May be involved in the synthesis of short and medium chain fatty acids. Accessory and non-catalytic subunit of the mitochondrial membrane respiratory chain NADH dehydrogenase (Complex I), which functions in the transfer of electrons from NADH to the respiratory chain. In Arabidopsis thaliana (Mouse-ear cress), this protein is Acyl carrier protein 1, mitochondrial (MTACP1).